The chain runs to 137 residues: uncharacterized protein (137 aa).

A disordered region spans residues 116–137; sequence ARPPRGSGGTRTARNGARTASE. A compositionally biased stretch (polar residues) spans 125-137; the sequence is TRTARNGARTASE.

This is an uncharacterized protein from Mycobacterium bovis (strain ATCC BAA-935 / AF2122/97).